A 128-amino-acid chain; its full sequence is Small ribosomal subunit protein eS8 (128 aa).

The interval methionine 1–proline 31 is disordered. Residues threonine 13–glutamate 27 show a composition bias toward basic residues.

The protein belongs to the eukaryotic ribosomal protein eS8 family. As to quaternary structure, part of the 30S ribosomal subunit.

This chain is Small ribosomal subunit protein eS8, found in Staphylothermus marinus (strain ATCC 43588 / DSM 3639 / JCM 9404 / F1).